The primary structure comprises 261 residues: General secretion pathway protein N (261 aa).

The Cytoplasmic portion of the chain corresponds to 1–10 (MRLEMIGLRT). The helical transmembrane segment at 11 to 31 (WLLATVVGWALLVCVLAVAGL) threads the bilayer. Residues 32–261 (GKRVELLPDD…QGGSTPGQTQ (230 aa)) are Periplasmic-facing. Residues 158 to 261 (VFNGQGGQPP…QGGSTPGQTQ (104 aa)) form a disordered region. A compositionally biased stretch (pro residues) spans 179–200 (AVPPLPPNVPPAPATPAPPPAE). Low complexity predominate over residues 201 to 211 (VPQQQPGGQAP). Positions 227 to 244 (RPSDEQMRAIRERIEARR) are enriched in basic and acidic residues.

Binds to XpsD.

Its subcellular location is the cell inner membrane. Its function is as follows. Involved in a general secretion pathway (GSP) for the export of proteins. The polypeptide is General secretion pathway protein N (xpsN) (Xanthomonas campestris pv. campestris (strain ATCC 33913 / DSM 3586 / NCPPB 528 / LMG 568 / P 25)).